A 221-amino-acid chain; its full sequence is Ribosomal RNA small subunit methyltransferase Nep1 (221 aa).

Residues Gly174, Gly179, and 196 to 201 (IGDETM) each bind S-adenosyl-L-methionine.

Belongs to the class IV-like SAM-binding methyltransferase superfamily. RNA methyltransferase NEP1 family. In terms of assembly, homodimer.

It catalyses the reaction a pseudouridine in rRNA + S-adenosyl-L-methionine = an N(1)-methylpseudouridine in rRNA + S-adenosyl-L-homocysteine + H(+). In terms of biological role, methyltransferase involved in ribosomal biogenesis. Specifically catalyzes the N1-methylation of the pseudouridine corresponding to position 914 in M.jannaschii 16S rRNA. The sequence is that of Ribosomal RNA small subunit methyltransferase Nep1 from Pyrobaculum islandicum (strain DSM 4184 / JCM 9189 / GEO3).